The following is a 589-amino-acid chain: MFVPRSLKLKRNSNDDLKSCEAKKSKPEAAGLQLEGNRETLVLESVTKEAVTADRPGSASSTSSPSCQLAEVCSTGPDQGVKDSHPSEEPVKSFSKTQRWPEPGEPVCVVCGRYGEYICDKTDEDVCSLECKAKHLLQVKEEEGSLKPSSPQGAASEPESPLDAFYVYKEHPFIVALRDDQIETLKQQLGISVQGQEVARPIIDFEHCGFPETLNQNLKKSGYEVPTPIQMQMIPVGLLGRDILASADTGSGKTAAFLLPVIIRALPEDKTPSALILTPTRELAIQIERQAKELMRGLPRMKTVLLVGGLPLPPQLYRLQQHVKADTMLKMGFQQQVLDVLEHTPSDCQTVLVSATIPDSIDQLADQLLHNPVRIVTGDKNLPCSSVRQIILWVEDPAKKKKLFEILNDQKLFKPPVLVFVDCKLGADLLSEAVQKITGLSSTSIHSEKSQVERREILKGLLEGDYEVVVSTGILGRGLDLVNVKLVVNFDMPSSLDEYVHQVGRVGRLGQNGTAITFINNNSKRLFWDVAKRVKPTGSILPPQLLNSPYLHEQKRKEQQKDRQTQSSLVTGANLMDIIRKHEKSSSQK.

Disordered regions lie at residues 1 to 36 (MFVPRSLKLKRNSNDDLKSCEAKKSKPEAAGLQLEG) and 48 to 98 (KEAV…SKTQ). Residues 12 to 27 (NSNDDLKSCEAKKSKP) are compositionally biased toward basic and acidic residues. Lys26 is covalently cross-linked (Glycyl lysine isopeptide (Lys-Gly) (interchain with G-Cter in SUMO2)). Residue Ser64 is modified to Phosphoserine. Over residues 80 to 91 (GVKDSHPSEEPV) the composition is skewed to basic and acidic residues. The HIT-type zinc finger occupies 104–133 (GEPVCVVCGRYGEYICDKTDEDVCSLECKA). Residues Ser156 and Ser160 each carry the phosphoserine modification. A Q motif motif is present at residues 203–231 (IDFEHCGFPETLNQNLKKSGYEVPTPIQM). In terms of domain architecture, Helicase ATP-binding spans 234–375 (IPVGLLGRDI…DQLLHNPVRI (142 aa)). 247-254 (ADTGSGKT) serves as a coordination point for ATP. A DEAD box motif is present at residues 323–326 (VKAD). Residues 399 to 549 (KKKKLFEILN…ILPPQLLNSP (151 aa)) enclose the Helicase C-terminal domain.

Belongs to the DEAD box helicase family. DDX59 subfamily. In terms of assembly, interacts (via HIT-type zinc finger) with the RUVBL1/RUVBL2 complex in the presence of ADP.

Its subcellular location is the cytoplasm. The protein localises to the nucleus. It catalyses the reaction ATP + H2O = ADP + phosphate + H(+). In Rattus norvegicus (Rat), this protein is Probable ATP-dependent RNA helicase DDX59 (Ddx59).